We begin with the raw amino-acid sequence, 177 residues long: Probetacellulin (177 aa).

An N-terminal signal peptide occupies residues 1 to 31 (MDPTAPGSSVSSLPLLLVLALGLAILHCVVA). Over 32–118 (DGNTTRTPET…LFYLQQDRGQ (87 aa)) the chain is Extracellular. N-linked (GlcNAc...) asparagine glycosylation is found at N34, N42, and N52. The region spanning 65-105 (HFSRCPKQYKHYCIHGRCRFVVDEQTPSCICEKGYFGARCE) is the EGF-like domain. Disulfide bonds link C69–C82, C77–C93, and C95–C104. The propeptide at 112–177 (LQQDRGQILV…SEDIQETNIA (66 aa)) is removed in mature form. Residues 119 to 139 (ILVVCLIVVMVVFIILVIGVC) traverse the membrane as a helical segment. Residues 140 to 177 (TCCHPLRKHRKKKKEEKMETLDKDKTPISEDIQETNIA) are Cytoplasmic-facing. Residues 153–177 (KEEKMETLDKDKTPISEDIQETNIA) form a disordered region. The segment covering 154 to 167 (EEKMETLDKDKTPI) has biased composition (basic and acidic residues).

In terms of assembly, monomer. Interacts with EGFR and ERBB4. In terms of tissue distribution, found in several mouse tissues including kidney, uterus and liver, as well as in beta tumor cell line and MCF-7 cells. It is not detected in the brain.

The protein localises to the secreted. Its subcellular location is the extracellular space. It localises to the cell membrane. Functionally, growth factor that binds to EGFR, ERBB4 and other EGF receptor family members. Potent mitogen for retinal pigment epithelial cells and vascular smooth muscle cells. This is Probetacellulin (Btc) from Mus musculus (Mouse).